The chain runs to 293 residues: Porphobilinogen deaminase (293 aa).

At C235 the chain carries S-(dipyrrolylmethanemethyl)cysteine.

The protein belongs to the HMBS family. Monomer. Dipyrromethane is required as a cofactor.

It catalyses the reaction 4 porphobilinogen + H2O = hydroxymethylbilane + 4 NH4(+). The protein operates within porphyrin-containing compound metabolism; protoporphyrin-IX biosynthesis; coproporphyrinogen-III from 5-aminolevulinate: step 2/4. Functionally, tetrapolymerization of the monopyrrole PBG into the hydroxymethylbilane pre-uroporphyrinogen in several discrete steps. The polypeptide is Porphobilinogen deaminase (Ruminiclostridium cellulolyticum (strain ATCC 35319 / DSM 5812 / JCM 6584 / H10) (Clostridium cellulolyticum)).